A 313-amino-acid polypeptide reads, in one-letter code: MTENYKHTSVLLDEAVNGLNIRPDGIYIDGTFGRGGHSRLILSQLGAEGRLLAIDRDPQAIAVAKTIDDPRFSFVHGPFSALADYVSERDLTGKIDGILLDLGVSSPQLDDAERGFSFMRDGPLDMRMDPTRGQSAAEWLLTAEEADIAWVIKTFGEERFGKRIARGIVERNRIEPMTRTKELAEVVTAATPVKDKFKHPATRTFQAVRIWVNSELEEIELALKSSLGVLAPGGRLSIISFHSLEDRIVKRFMREQSRGPQVPAGLPMTEDQLRKLGGRYLRVLGKMMPGEEEVAENPRARSSVLRIAERTNA.

Residues 35 to 37 (GGH), Asp-55, Phe-79, Asp-101, and Gln-108 each bind S-adenosyl-L-methionine.

It belongs to the methyltransferase superfamily. RsmH family.

Its subcellular location is the cytoplasm. It carries out the reaction cytidine(1402) in 16S rRNA + S-adenosyl-L-methionine = N(4)-methylcytidine(1402) in 16S rRNA + S-adenosyl-L-homocysteine + H(+). Functionally, specifically methylates the N4 position of cytidine in position 1402 (C1402) of 16S rRNA. In Enterobacter sp. (strain 638), this protein is Ribosomal RNA small subunit methyltransferase H.